The sequence spans 246 residues: Complement C1q tumor necrosis factor-related protein 3 (246 aa).

Residues 1–22 form the signal peptide; it reads MLWRQLIYWQLLALFFLPFCLC. In terms of domain architecture, Collagen-like spans 51–113; the sequence is GYQGPPGPPG…KGEKGYPGIP (63 aa). The tract at residues 53–110 is disordered; sequence QGPPGPPGPPGIPGNHGNNGNNGATGHEGAKGEKGDKGDLGPRGERGQHGPKGEKGYP. The segment covering 55–64 has biased composition (pro residues); it reads PPGPPGPPGI. Residues 65–74 are compositionally biased toward low complexity; that stretch reads PGNHGNNGNN. Asn70 carries N-linked (GlcNAc...) asparagine glycosylation. The span at 80–107 shows a compositional bias: basic and acidic residues; the sequence is EGAKGEKGDKGDLGPRGERGQHGPKGEK. One can recognise a C1q domain in the interval 113 to 246; sequence PPELQIAFMA…FAGFLLFETK (134 aa).

In terms of processing, glycosylated on Asn-70. As to expression, expressed in colon and small intestine.

It is found in the secreted. This is Complement C1q tumor necrosis factor-related protein 3 (C1QTNF3) from Homo sapiens (Human).